Here is a 120-residue protein sequence, read N- to C-terminus: Large ribosomal subunit protein uL18 (120 aa).

The protein belongs to the universal ribosomal protein uL18 family. As to quaternary structure, part of the 50S ribosomal subunit; part of the 5S rRNA/L5/L18/L25 subcomplex. Contacts the 5S and 23S rRNAs.

Functionally, this is one of the proteins that bind and probably mediate the attachment of the 5S RNA into the large ribosomal subunit, where it forms part of the central protuberance. This Azorhizobium caulinodans (strain ATCC 43989 / DSM 5975 / JCM 20966 / LMG 6465 / NBRC 14845 / NCIMB 13405 / ORS 571) protein is Large ribosomal subunit protein uL18.